Consider the following 108-residue polypeptide: Large ribosomal subunit protein bL21c (108 aa).

The protein belongs to the bacterial ribosomal protein bL21 family. Part of the 50S ribosomal subunit.

Its subcellular location is the plastid. It is found in the chloroplast. Its function is as follows. This protein binds to 23S rRNA. The polypeptide is Large ribosomal subunit protein bL21c (Cyanidium caldarium (Red alga)).